Reading from the N-terminus, the 347-residue chain is UPF0283 membrane protein ECA1987 (347 aa).

The span at 1–11 (MNEPLKPRVTF) shows a compositional bias: basic and acidic residues. The tract at residues 1–48 (MNEPLKPRVTFDDVSPQEPQPQLRAGLAFDEQSSTPFSPISREEEVPE) is disordered. Helical transmembrane passes span 70-90 (MVMAGVALFGISALAQGVQSL), 99-119 (WIALGGITAGSLIVAAGVGSL), and 213-233 (ESTLMIAVSPLALVDMAFIAW).

It belongs to the UPF0283 family.

Its subcellular location is the cell inner membrane. In Pectobacterium atrosepticum (strain SCRI 1043 / ATCC BAA-672) (Erwinia carotovora subsp. atroseptica), this protein is UPF0283 membrane protein ECA1987.